Consider the following 303-residue polypeptide: 2-(5''-triphosphoribosyl)-3'-dephosphocoenzyme-A synthase (303 aa).

Belongs to the CitG/MdcB family.

It catalyses the reaction 3'-dephospho-CoA + ATP = 2'-(5''-triphospho-alpha-D-ribosyl)-3'-dephospho-CoA + adenine. Catalyzes the formation of 2-(5''-triphosphoribosyl)-3'-dephosphocoenzyme-A, the precursor of the prosthetic group of the holo-acyl carrier protein (gamma chain) of citrate lyase, from ATP and dephospho-CoA. The chain is 2-(5''-triphosphoribosyl)-3'-dephosphocoenzyme-A synthase from Escherichia fergusonii (strain ATCC 35469 / DSM 13698 / CCUG 18766 / IAM 14443 / JCM 21226 / LMG 7866 / NBRC 102419 / NCTC 12128 / CDC 0568-73).